Reading from the N-terminus, the 170-residue chain is N-alpha-acetyltransferase 50 (170 aa).

In terms of domain architecture, N-acetyltransferase spans I6–K155. Substrate is bound at residue Y31. The active site involves Y73. M75 contacts substrate. L77–T90 lines the acetyl-CoA pocket. C79 to T90 serves as a coordination point for CoA. Residue H112 is part of the active site. N117–K126 contributes to the CoA binding site. The interval Y138–R141 is substrate.

It belongs to the acetyltransferase family. GNAT subfamily.

The protein resides in the cytoplasm. The protein localises to the nucleus. The enzyme catalyses N-terminal L-methionyl-L-alanyl-[protein] + acetyl-CoA = N-terminal N(alpha)-acetyl-L-methionyl-L-alanyl-[protein] + CoA + H(+). It catalyses the reaction N-terminal L-methionyl-L-seryl-[protein] + acetyl-CoA = N-terminal N(alpha)-acetyl-L-methionyl-L-seryl-[protein] + CoA + H(+). The catalysed reaction is N-terminal L-methionyl-L-valyl-[protein] + acetyl-CoA = N-terminal N(alpha)-acetyl-L-methionyl-L-valyl-[protein] + CoA + H(+). It carries out the reaction N-terminal L-methionyl-L-threonyl-[protein] + acetyl-CoA = N-terminal N(alpha)-acetyl-L-methionyl-L-threonyl-[protein] + CoA + H(+). The enzyme catalyses N-terminal L-methionyl-L-lysyl-[protein] + acetyl-CoA = N-terminal N(alpha)-acetyl-L-methionyl-L-lysyl-[protein] + CoA + H(+). It catalyses the reaction N-terminal L-methionyl-L-leucyl-[protein] + acetyl-CoA = N-terminal N(alpha)-acetyl-L-methionyl-L-leucyl-[protein] + CoA + H(+). The catalysed reaction is N-terminal L-methionyl-L-phenylalanyl-[protein] + acetyl-CoA = N-terminal N(alpha)-acetyl-L-methionyl-L-phenylalanyl-[protein] + CoA + H(+). It carries out the reaction N-terminal L-methionyl-L-tyrosyl-[protein] + acetyl-CoA = N-terminal N(alpha)-acetyl-L-methionyl-L-tyrosyl-[protein] + CoA + H(+). N-alpha-acetyltransferase that acetylates the N-terminus of proteins that retain their initiating methionine. Has a broad substrate specificity: able to acetylate the initiator methionine of most peptides, except for those with a proline in second position. Also displays N-epsilon-acetyltransferase activity by mediating acetylation of the side chain of specific lysines on proteins. The relevance of N-epsilon-acetyltransferase activity is however unclear. Required for sister chromatid cohesion during mitosis by promoting binding of CDCA5/sororin to cohesin. The protein is N-alpha-acetyltransferase 50 (naa50) of Xenopus laevis (African clawed frog).